Reading from the N-terminus, the 392-residue chain is GTPase Obg (392 aa).

The Obg domain occupies 1-159 (MKFIDEALIR…RDLQLELMLL (159 aa)). The 174-residue stretch at 160 to 333 (ADVGMLGLPN…LCRDIMDFIE (174 aa)) folds into the OBG-type G domain. Residues 166–173 (GLPNAGKS), 191–195 (FTTLV), 213–216 (DIPG), 283–286 (NKID), and 314–316 (SAA) each bind GTP. Residues Ser173 and Thr193 each coordinate Mg(2+). The interval 362–392 (EQVFTEDDQEGDDWDDWSEDDEEGVEIIYKP) is disordered. Acidic residues predominate over residues 365–386 (FTEDDQEGDDWDDWSEDDEEGV).

This sequence belongs to the TRAFAC class OBG-HflX-like GTPase superfamily. OBG GTPase family. Monomer. Mg(2+) is required as a cofactor.

The protein localises to the cytoplasm. An essential GTPase which binds GTP, GDP and possibly (p)ppGpp with moderate affinity, with high nucleotide exchange rates and a fairly low GTP hydrolysis rate. Plays a role in control of the cell cycle, stress response, ribosome biogenesis and in those bacteria that undergo differentiation, in morphogenesis control. This Histophilus somni (strain 129Pt) (Haemophilus somnus) protein is GTPase Obg.